The primary structure comprises 414 residues: Serine/arginine (SR)-type shuttling mRNA binding protein NPL3 (414 aa).

A compositionally biased stretch (basic and acidic residues) spans 1-11 (MSEAQETHVEQ). The segment at 1 to 119 (MSEAQETHVE…GRPPMHHRQE (119 aa)) is disordered. Serine 15 is subject to Phosphoserine. Residues 33–51 (DAPQEPQVPQESAPQESAP) are compositionally biased toward low complexity. Residues 52–68 (QEPPAPQEQNDVPPPSN) are compositionally biased toward pro residues. Over residues 75-92 (EESHSVQDYQEAHQHHQP) the composition is skewed to basic and acidic residues. A Phosphoserine modification is found at serine 79. The segment covering 93–105 (PEPQPYYPPPPPG) has biased composition (pro residues). 2 consecutive RRM domains span residues 125–195 (TRLF…YSKL) and 200–275 (YRIT…RDDN). Phosphoserine occurs at positions 182, 212, and 224. The disordered stretch occupies residues 269–299 (TVERDDNPPPIRRSNRGGFRGRGGFRGGFRG). Gly residues predominate over residues 286–299 (GFRGRGGFRGGFRG). Residues arginine 288, arginine 290, arginine 294, and arginine 298 each carry the dimethylated arginine modification. Arginine 302 bears the Omega-N-methylarginine mark. 2 positions are modified to dimethylated arginine; alternate: arginine 307 and arginine 314. Omega-N-methylarginine; alternate occurs at positions 307 and 314. Omega-N-methylarginine occurs at positions 321, 329, 337, and 344. Positions 343-414 (SRGGYDSPRG…DAPRERSPTR (72 aa)) are disordered. The segment covering 346 to 360 (GYDSPRGGYDSPRGG) has biased composition (low complexity). Arginine 351 is modified (dimethylated arginine; alternate). Arginine 351 carries the post-translational modification Omega-N-methylarginine; alternate. Position 356 is a phosphoserine (serine 356). Arginine 358, arginine 363, arginine 377, and arginine 384 each carry dimethylated arginine; alternate. Residues arginine 358, arginine 363, arginine 377, and arginine 384 each carry the omega-N-methylarginine; alternate modification. Residues 379 to 389 (SYGGSRGGYDG) are compositionally biased toward gly residues. At arginine 391 the chain carries Omega-N-methylarginine. A compositionally biased stretch (basic and acidic residues) spans 399–414 (DAYRTRDAPRERSPTR).

This sequence belongs to the RRM GAR family. In terms of assembly, interacts with RRP6. In terms of processing, methylated by HMT1. The methylation is required for nuclear export.

The protein resides in the cytoplasm. The protein localises to the nucleus. It is found in the stress granule. In terms of biological role, involved in mRNA processing and export. Required for efficient splicing of a large set of pre-mRNAs by efficient co-transcriptional recruitment of the splicing machinery. Remains associated with the mRNP during early steps of translation elongation. The sequence is that of Serine/arginine (SR)-type shuttling mRNA binding protein NPL3 from Saccharomyces cerevisiae (strain ATCC 204508 / S288c) (Baker's yeast).